A 230-amino-acid chain; its full sequence is MDPAMPLQLWNLPLLLVGSVLGLTSVSAQGNNLEICLLPLDAGPCQALIPKFYYDRDQQKCRRFNYGGCLGNANNFHSRDLCQQTCGSIEKVPPVCRSELKTYPCDKPNIRFFFNLNTMTCEPLRPGLCSRTINVFSEEATCKGLCEPRKHIPSFCSSPKDEGLCSANVTRFYFNSRNKTCETFTYTGCGGNENNFYYLDACHRACVKGWKKPKRWKIGDFLPRFWKHLS.

The N-terminal stretch at 1 to 22 is a signal peptide; it reads MDPAMPLQLWNLPLLLVGSVLG. BPTI/Kunitz inhibitor domains follow at residues 36–86, 96–146, and 156–206; these read CLLP…QQTC, CRSE…KGLC, and CSSP…HRAC. Cystine bridges form between C36-C86, C45-C69, C61-C82, C96-C146, C105-C129, C121-C142, C156-C206, C165-C189, and C181-C202. Residues N168 and N178 are each glycosylated (N-linked (GlcNAc...) asparagine).

As to quaternary structure, finds in a complex with ABCB1, TFPI2 and PPP2R3C; leading to the dephosphorylation of ABCB1. In terms of tissue distribution, highly expressed in placenta. Also expressed in liver and kidney.

It localises to the secreted. Functionally, may play a role in the regulation of plasmin-mediated matrix remodeling. Inhibits trypsin, plasmin, factor VIIa/tissue factor and weakly factor Xa. Has no effect on thrombin. This Mus musculus (Mouse) protein is Tissue factor pathway inhibitor 2 (Tfpi2).